The primary structure comprises 254 residues: Glutamate racemase (254 aa).

Substrate-binding positions include 7–8 (DS) and 39–40 (YG). The active-site Proton donor/acceptor is C70. Residues 71–72 (NT) and E147 contribute to the substrate site. C178 (proton donor/acceptor) is an active-site residue. 179–180 (TH) contacts substrate.

This sequence belongs to the aspartate/glutamate racemases family. In terms of assembly, homodimer.

The enzyme catalyses L-glutamate = D-glutamate. It participates in cell wall biogenesis; peptidoglycan biosynthesis. Its function is as follows. Provides the (R)-glutamate required for cell wall biosynthesis. Converts L- or D-glutamate to D- or L-glutamate, respectively, but not other amino acids such as alanine, aspartate, and glutamine. The polypeptide is Glutamate racemase (Aquifex pyrophilus).